Reading from the N-terminus, the 201-residue chain is MQRDMSINHLLPPLSGPGQVEQLTGFTNDIVYNDFYAHAVSYNPYPSEKIDFPKKNTAHKNSTTSTVASSGNTTMEKPCVGSEEWYKAKRLSHKEVERRRREAISEGIKELANIVPGCEKNKGSILQRTAQYIRSLKEMEEMCREKSNLEKLVADHTIQELARENARLKSECERAWRSVELWKQAARSFDSELDVEENSES.

The interval Pro-53–Thr-74 is disordered. Over residues His-59–Thr-74 the composition is skewed to polar residues. One can recognise a bHLH domain in the interval Ala-88–Leu-136.

The protein resides in the nucleus. This is an uncharacterized protein from Schizosaccharomyces pombe (strain 972 / ATCC 24843) (Fission yeast).